The following is a 387-amino-acid chain: Fetuin-B (387 aa).

The first 18 residues, 1 to 18 (MNVLLLLVLCTLAMGCGA), serve as a signal peptide directing secretion. 2 Cystatin fetuin-B-type domains span residues 25 to 139 (AARP…YNCT) and 150 to 258 (MTCP…VTCS). Asn37 carries N-linked (GlcNAc...) asparagine glycosylation. Disulfide bonds link Cys94-Cys105, Cys118-Cys138, Cys152-Cys155, Cys217-Cys225, and Cys238-Cys257. Asn137 carries N-linked (GlcNAc...) asparagine glycosylation. Residues 264 to 306 (APTPRGENATVNQRPANPSKTEELQQQNTAPTNSPTKAVPKGS) form a disordered region. Asn271 is a glycosylation site (N-linked (GlcNAc...) asparagine). A compositionally biased stretch (polar residues) spans 272–299 (ATVNQRPANPSKTEELQQQNTAPTNSPT). O-linked (GalNAc...) threonine glycosylation is found at Thr292 and Thr295. Position 320 is a phosphoserine (Ser320). A disordered region spans residues 366–387 (KEQRSAECPGPAQKGYPFILPS).

It belongs to the fetuin family. Liver and testis.

Its subcellular location is the secreted. Its function is as follows. Protease inhibitor required for egg fertilization. Required to prevent premature zona pellucida hardening before fertilization, probably by inhibiting the protease activity of ASTL, a protease that mediates the cleavage of ZP2 and triggers zona pellucida hardening. The chain is Fetuin-B (FETUB) from Bos taurus (Bovine).